The sequence spans 25 residues: C-type natriuretic peptide (25 aa).

An intrachain disulfide couples Cys-9 to Cys-25.

As to expression, venom gland.

It is found in the secreted. Functionally, snake venom natriuretic peptide that has a vasorelaxant activity in rat aortic strips and a diuretic potency in anesthetized rats. May act by activating natriuretic receptors (NPR1 and/or NPR2). This Crotalus atrox (Western diamondback rattlesnake) protein is C-type natriuretic peptide.